The following is a 679-amino-acid chain: UvrABC system protein B (679 aa).

The region spanning 25-176 is the Helicase ATP-binding domain; sequence EGVNGGERYQ…NLRGSLRDLV (152 aa). 38-45 is an ATP binding site; it reads GATGTGKT. A Beta-hairpin motif is present at residues 91 to 114; that stretch reads YYDYYQPEAYVPVSDTYIAKTASI. The Helicase C-terminal domain occupies 429–591; the sequence is QVDDLLGEIR…ITPTAAGKKA (163 aa). One can recognise a UVR domain in the interval 638–673; that stretch reads PELIDQLELKMKESAKKLDFEEAANLRDRIKKLRQK.

The protein belongs to the UvrB family. Forms a heterotetramer with UvrA during the search for lesions. Interacts with UvrC in an incision complex.

Its subcellular location is the cytoplasm. In terms of biological role, the UvrABC repair system catalyzes the recognition and processing of DNA lesions. A damage recognition complex composed of 2 UvrA and 2 UvrB subunits scans DNA for abnormalities. Upon binding of the UvrA(2)B(2) complex to a putative damaged site, the DNA wraps around one UvrB monomer. DNA wrap is dependent on ATP binding by UvrB and probably causes local melting of the DNA helix, facilitating insertion of UvrB beta-hairpin between the DNA strands. Then UvrB probes one DNA strand for the presence of a lesion. If a lesion is found the UvrA subunits dissociate and the UvrB-DNA preincision complex is formed. This complex is subsequently bound by UvrC and the second UvrB is released. If no lesion is found, the DNA wraps around the other UvrB subunit that will check the other stand for damage. In Synechococcus sp. (strain CC9311), this protein is UvrABC system protein B.